Here is a 37-residue protein sequence, read N- to C-terminus: Large ribosomal subunit protein bL36c (37 aa).

Belongs to the bacterial ribosomal protein bL36 family.

The protein resides in the plastid. Its subcellular location is the chloroplast. In Lolium perenne (Perennial ryegrass), this protein is Large ribosomal subunit protein bL36c.